The following is a 256-amino-acid chain: Dioxygenase lolE1 (256 aa).

Fe cation contacts are provided by His-125, Asp-127, and His-203.

Belongs to the PhyH family. In terms of assembly, homodimer. It depends on Fe cation as a cofactor.

Its pathway is alkaloid biosynthesis. In terms of biological role, dioxygenase; part of the gene cluster that mediates the biosynthesis of loline alkaloids, potent insecticidal agents composed of a pyrrolizidine ring system and an uncommon ether bridge linking carbons 2 and 7. Lolines are structurally differentiated by the various modifications of the L-amino group and include norloline, loline, N-methylloline, N-acetylloline, N-acetylnorloline, and N-formylloline. The first committed step is the condensation of O-acetyl-L-homoserine (derived from L-aspartic acid) and L-proline, probably catalyzed by the gamma-type pyridoxal 5'-phosphate(PLP)-dependent enzyme lolC, to give the diamino diacid, NACPP. Ensuing cyclization, decarboxylation, and acetylation steps yield 1-exo-acetamidopyrrolizidine (AcAP). LolO is required for installation of the ether bridge upon the pathway intermediate, 1-exo-acetamidopyrrolizidine (AcAP). In sequential 2-oxoglutarate- and O(2)-consuming steps, lolO removes hydrogens from C2 and C7 of AcAP to form both carbon-oxygen bonds in N-acetylnorloline (NANL), the precursor to all other lolines. The enzymes lolD, lolE, lolF and lolT have also been proposed to be involved in the ether-bridge installation. Further processing of the exocyclic moiety of NANL by fungal N-acetamidase (LolN), methyltransferase (LolM), and cytochrome P450 (LolP) enzymes, with occasional involvement of a plant acetyltransferase, generates the other known lolines. LolN transforms NANL to norlonine which is monomethylated and dimethylated to respectively lonine and N-methyllonine (NML) by lolM. LolP catalyzes hydroxylation of the methyl group in N-methylloline (NML) and further oxygenation to N-formylloline (NFL). A plant acetyltransferase is responsible for the acetylation of loline to form N-acetylloline (NAL). LolA might interact with aspartate kinase to prevent feedback inhibition of its activity by these end products and thereby promote production of L-homoserine from L-aspartate. This chain is Dioxygenase lolE1, found in Epichloe uncinata (Endophyte fungus).